The chain runs to 180 residues: Crossover junction endodeoxyribonuclease RuvC (180 aa).

Residues Asp7, Glu66, and Asp138 contribute to the active site. Mg(2+) is bound by residues Asp7, Glu66, and Asp138.

Belongs to the RuvC family. As to quaternary structure, homodimer which binds Holliday junction (HJ) DNA. The HJ becomes 2-fold symmetrical on binding to RuvC with unstacked arms; it has a different conformation from HJ DNA in complex with RuvA. In the full resolvosome a probable DNA-RuvA(4)-RuvB(12)-RuvC(2) complex forms which resolves the HJ. Mg(2+) is required as a cofactor.

The protein resides in the cytoplasm. It carries out the reaction Endonucleolytic cleavage at a junction such as a reciprocal single-stranded crossover between two homologous DNA duplexes (Holliday junction).. Its function is as follows. The RuvA-RuvB-RuvC complex processes Holliday junction (HJ) DNA during genetic recombination and DNA repair. Endonuclease that resolves HJ intermediates. Cleaves cruciform DNA by making single-stranded nicks across the HJ at symmetrical positions within the homologous arms, yielding a 5'-phosphate and a 3'-hydroxyl group; requires a central core of homology in the junction. The consensus cleavage sequence is 5'-(A/T)TT(C/G)-3'. Cleavage occurs on the 3'-side of the TT dinucleotide at the point of strand exchange. HJ branch migration catalyzed by RuvA-RuvB allows RuvC to scan DNA until it finds its consensus sequence, where it cleaves and resolves the cruciform DNA. The protein is Crossover junction endodeoxyribonuclease RuvC of Burkholderia pseudomallei (strain 1710b).